An 861-amino-acid polypeptide reads, in one-letter code: Replication factor C subunit 1 (861 aa).

The tract at residues methionine 1 to asparagine 103 is disordered. A compositionally biased stretch (polar residues) spans arginine 16–serine 28. Position 38 is a phosphothreonine (threonine 38). Residue serine 40 is modified to Phosphoserine. Threonine 63 bears the Phosphothreonine mark. The BRCT domain occupies glycine 153–alanine 243. Residues threonine 299, cysteine 311, glycine 353–threonine 361, and asparagine 456 each bind ATP. The interval serine 788–alanine 861 is disordered. The span at aspartate 803–glutamine 823 shows a compositional bias: acidic residues. 2 short sequence motifs (nuclear localization signal) span residues lysine 830–leucine 834 and lysine 855–lysine 860. The span at lysine 836–alanine 861 shows a compositional bias: basic residues.

Belongs to the activator 1 large subunit family. Replication factor C (RFC) is a heteropentamer of subunits RFC1, RFC2, RFC3, RFC4 and RFC5 and forms a complex with POL30/PCNA in the presence of ATP. Interacts with ECO1 and POL30/PCNA.

It localises to the nucleus. Component of the ATP-dependent clamp loader RFC complex for the POL30/PCNA homotrimer DNA clamp. During a clamp loading circle, the RFC:clamp complex binds to DNA and the recognition of the double-stranded/single-stranded junction stimulates ATP hydrolysis by RFC. The complex presumably provides bipartite ATP sites in which one subunit supplies a catalytic site for hydrolysis of ATP bound to the neighboring subunit. Dissociation of RFC from the clamp leaves the clamp encircling DNA. Replication factor C (RFC or activator 1) complex acts during elongation of primed DNA templates by DNA polymerase delta and epsilon. RFC has an essential but redundant activity in sister chromatid cohesion establishment. In Saccharomyces cerevisiae (strain ATCC 204508 / S288c) (Baker's yeast), this protein is Replication factor C subunit 1 (RFC1).